Consider the following 269-residue polypeptide: Tryptophan synthase alpha chain (269 aa).

Active-site proton acceptor residues include E49 and D60.

It belongs to the TrpA family. In terms of assembly, tetramer of two alpha and two beta chains.

It carries out the reaction (1S,2R)-1-C-(indol-3-yl)glycerol 3-phosphate + L-serine = D-glyceraldehyde 3-phosphate + L-tryptophan + H2O. It participates in amino-acid biosynthesis; L-tryptophan biosynthesis; L-tryptophan from chorismate: step 5/5. Functionally, the alpha subunit is responsible for the aldol cleavage of indoleglycerol phosphate to indole and glyceraldehyde 3-phosphate. The protein is Tryptophan synthase alpha chain of Buchnera aphidicola subsp. Schlechtendalia chinensis.